The primary structure comprises 134 residues: MKVIRIILQVLILYVFFMIGEAIQHLFHLPVSGSIVGLVLLLICLGLRIVPVSIIEDGAGFLLSFLPLLFIPAMTGVINYPSLISFNGLMLLITVVLSTIVTIIAAGFASQLLEKKAKKREEKEKCSKHVSRSL.

A run of 4 helical transmembrane segments spans residues 3–23, 35–55, 58–78, and 89–109; these read VIRI…GEAI, IVGL…VSII, GAGF…TGVI, and LMLL…AGFA.

It is found in the cell membrane. The protein is Putative integral membrane protein YxzK (yxzK) of Bacillus subtilis (strain 168).